Consider the following 586-residue polypeptide: Protein cereblon (586 aa).

2 disordered regions span residues 1–114 (MDDE…LPRW) and 158–194 (SQERRRSRTSEETSQEDVEQPEDPPPQQPPRPPIDIG). Residues 14 to 37 (GRDEDVQLEDHSQAQGLQDRRVDA) show a composition bias toward basic and acidic residues. A compositionally biased stretch (acidic residues) spans 75 to 85 (MVEDGLQDDTA). Residues 86 to 96 (SEGSHPSSDMS) show a composition bias toward polar residues. A compositionally biased stretch (basic and acidic residues) spans 159 to 168 (QERRRSRTSE). Over residues 170 to 179 (TSQEDVEQPE) the composition is skewed to acidic residues. Pro residues predominate over residues 180-190 (DPPPQQPPRPP). One can recognise a Lon N-terminal domain in the interval 226–452 (HMLIFLHQHI…LIKSTFTDES (227 aa)). The CULT domain maps to 451 to 560 (ESLFFCRYCN…LAGSSVRIGK (110 aa)). Zn(2+)-binding residues include C456, C459, C525, and C528.

Belongs to the CRBN family. Likely a component of a DCX (DDB1-CUL4-X-box) protein ligase complex. May interact with pic/DDB1. Post-translationally, ubiquitinated.

The protein localises to the nucleus. It functions in the pathway protein modification; protein ubiquitination. Its function is as follows. Substrate recognition component of a DCX (DDB1-CUL4-X-box) E3 protein ligase complex that mediates the ubiquitination and subsequent proteasomal degradation of target proteins. Has an essential role in mediating growth by negatively regulating insulin signaling. It also has a role in maintaining presynaptic function in the neuromuscular junction synapses of third-instar larvae. This chain is Protein cereblon, found in Drosophila erecta (Fruit fly).